The following is a 355-amino-acid chain: Peptide chain release factor 1 (355 aa).

At glutamine 234 the chain carries N5-methylglutamine.

It belongs to the prokaryotic/mitochondrial release factor family. In terms of processing, methylated by PrmC. Methylation increases the termination efficiency of RF1.

It localises to the cytoplasm. Its function is as follows. Peptide chain release factor 1 directs the termination of translation in response to the peptide chain termination codons UAG and UAA. The protein is Peptide chain release factor 1 of Metamycoplasma arthritidis (strain 158L3-1) (Mycoplasma arthritidis).